Here is a 110-residue protein sequence, read N- to C-terminus: Insulin (110 aa).

The first 24 residues, 1-24 (MALWTRLLPLLALLALLGPDPAQA), serve as a signal peptide directing secretion. 3 cysteine pairs are disulfide-bonded: C31-C96, C43-C109, and C95-C100. The propeptide at 57 to 87 (EVEEQQGGQVELGGGPGAGLPQPLALEMALQ) is c peptide.

This sequence belongs to the insulin family. As to quaternary structure, heterodimer of a B chain and an A chain linked by two disulfide bonds.

The protein resides in the secreted. In terms of biological role, insulin decreases blood glucose concentration. It increases cell permeability to monosaccharides, amino acids and fatty acids. It accelerates glycolysis, the pentose phosphate cycle, and glycogen synthesis in liver. The polypeptide is Insulin (INS) (Ictidomys tridecemlineatus (Thirteen-lined ground squirrel)).